A 90-amino-acid polypeptide reads, in one-letter code: uncharacterized protein (90 aa).

3 consecutive transmembrane segments (helical) span residues Phe-5–Ile-27, Ile-40–Ala-62, and Met-67–Val-89.

Its subcellular location is the cell membrane. This is an uncharacterized protein from Archaeoglobus fulgidus (strain ATCC 49558 / DSM 4304 / JCM 9628 / NBRC 100126 / VC-16).